The primary structure comprises 442 residues: Probable D-serine dehydratase (442 aa).

Residue Lys-115 is modified to N6-(pyridoxal phosphate)lysine.

The protein belongs to the serine/threonine dehydratase family. DsdA subfamily. It depends on pyridoxal 5'-phosphate as a cofactor.

It catalyses the reaction D-serine = pyruvate + NH4(+). In Halalkalibacterium halodurans (strain ATCC BAA-125 / DSM 18197 / FERM 7344 / JCM 9153 / C-125) (Bacillus halodurans), this protein is Probable D-serine dehydratase.